Reading from the N-terminus, the 353-residue chain is D-alanine--D-alanine ligase (353 aa).

An ATP-grasp domain is found at 141 to 349; it reads KAAFAAAGLP…LPDLVAQLVH (209 aa). 176–231 is an ATP binding site; that stretch reads EAELGYPCFVKPANMGSSVGISKARHRDQLLAGLKEAARHDTRLVVEHGVSARELE. Mg(2+) contacts are provided by aspartate 302, glutamate 316, and asparagine 318.

This sequence belongs to the D-alanine--D-alanine ligase family. Mg(2+) serves as cofactor. It depends on Mn(2+) as a cofactor.

It is found in the cytoplasm. It carries out the reaction 2 D-alanine + ATP = D-alanyl-D-alanine + ADP + phosphate + H(+). Its pathway is cell wall biogenesis; peptidoglycan biosynthesis. Functionally, cell wall formation. The sequence is that of D-alanine--D-alanine ligase from Synechococcus sp. (strain CC9311).